A 1494-amino-acid chain; its full sequence is DNA-directed RNA polymerase subunit beta' (1494 aa).

4 residues coordinate Zn(2+): C67, C69, C82, and C85. Residues D499, D501, and D503 each contribute to the Mg(2+) site. The Zn(2+) site is built by C868, C944, C951, and C954.

The protein belongs to the RNA polymerase beta' chain family. In terms of assembly, the RNAP catalytic core consists of 2 alpha, 1 beta, 1 beta' and 1 omega subunit. When a sigma factor is associated with the core the holoenzyme is formed, which can initiate transcription. Mg(2+) is required as a cofactor. It depends on Zn(2+) as a cofactor.

The enzyme catalyses RNA(n) + a ribonucleoside 5'-triphosphate = RNA(n+1) + diphosphate. Functionally, DNA-dependent RNA polymerase catalyzes the transcription of DNA into RNA using the four ribonucleoside triphosphates as substrates. In Chlorobaculum parvum (strain DSM 263 / NCIMB 8327) (Chlorobium vibrioforme subsp. thiosulfatophilum), this protein is DNA-directed RNA polymerase subunit beta'.